We begin with the raw amino-acid sequence, 304 residues long: Glutaminase (304 aa).

Ser63, Asn114, Glu158, Asn165, Tyr189, Tyr240, and Val258 together coordinate substrate.

The protein belongs to the glutaminase family. As to quaternary structure, homotetramer.

The enzyme catalyses L-glutamine + H2O = L-glutamate + NH4(+). The sequence is that of Glutaminase from Shewanella baltica (strain OS155 / ATCC BAA-1091).